The primary structure comprises 203 residues: Small ribosomal subunit protein uS3 (203 aa).

In terms of domain architecture, KH type-2 spans 39 to 113 (IREIIRRNFL…NHVLNAKNIA (75 aa)).

The protein belongs to the universal ribosomal protein uS3 family. Part of the 30S ribosomal subunit. Forms a tight complex with proteins S10 and S14.

In terms of biological role, binds the lower part of the 30S subunit head. Binds mRNA in the 70S ribosome, positioning it for translation. The sequence is that of Small ribosomal subunit protein uS3 from Carsonella ruddii.